A 255-amino-acid chain; its full sequence is NAD kinase (255 aa).

Asp-44 acts as the Proton acceptor in catalysis. NAD(+)-binding positions include 44–45, His-49, 114–115, Asp-144, Ala-152, 155–160, and Gln-216; these read DG, NE, and SAYNLS.

It belongs to the NAD kinase family. A divalent metal cation is required as a cofactor.

The protein resides in the cytoplasm. It carries out the reaction NAD(+) + ATP = ADP + NADP(+) + H(+). Functionally, involved in the regulation of the intracellular balance of NAD and NADP, and is a key enzyme in the biosynthesis of NADP. Catalyzes specifically the phosphorylation on 2'-hydroxyl of the adenosine moiety of NAD to yield NADP. The protein is NAD kinase of Rickettsia akari (strain Hartford).